The chain runs to 332 residues: Ribosomal RNA small subunit methyltransferase C (332 aa).

This sequence belongs to the methyltransferase superfamily. RsmC family. As to quaternary structure, monomer.

The protein localises to the cytoplasm. It carries out the reaction guanosine(1207) in 16S rRNA + S-adenosyl-L-methionine = N(2)-methylguanosine(1207) in 16S rRNA + S-adenosyl-L-homocysteine + H(+). Its function is as follows. Specifically methylates the guanine in position 1207 of 16S rRNA in the 30S particle. This chain is Ribosomal RNA small subunit methyltransferase C, found in Pseudomonas aeruginosa (strain LESB58).